The chain runs to 300 residues: UDP-N-acetylenolpyruvoylglucosamine reductase (300 aa).

An FAD-binding PCMH-type domain is found at 27–216 (RVGGPADVIF…TERREKTQPI (190 aa)). Arg-172 is a catalytic residue. Ser-223 functions as the Proton donor in the catalytic mechanism. Glu-293 is a catalytic residue.

It belongs to the MurB family. FAD serves as cofactor.

The protein localises to the cytoplasm. It catalyses the reaction UDP-N-acetyl-alpha-D-muramate + NADP(+) = UDP-N-acetyl-3-O-(1-carboxyvinyl)-alpha-D-glucosamine + NADPH + H(+). Its pathway is cell wall biogenesis; peptidoglycan biosynthesis. In terms of biological role, cell wall formation. This is UDP-N-acetylenolpyruvoylglucosamine reductase from Phenylobacterium zucineum (strain HLK1).